The sequence spans 347 residues: MRALGAVVTLLLWGQLFAVELGNDAMDFEDDSCPKPPEIANGYVEHLVRYRCRQFYRLRAEGDGVYTLNDEKQWMNTVAGEKLPECEAVCGKPKHPVDQVQRIIGGSMDAKGSFPWQAKMISRHGLTTGATLISDQWLLTTAKNLFLNHSETASGKDIAPTLTLYVGKNQLVEIEKVILHPNHSVVDIGLIKLKQRVLVTERVMPICLPSKDYVAPGRVGYVSGWGRNQDFRFTDRLKYVMLPVADQDKCVVHYEKSTVPEKKNFTSPVGVQPILNEHTFCAGLTKYEEDTCYGDAGSAFAIHDMEEDTWYAAGILSFDKSCAVAEYGVYVRATDLKDWVQETMAKN.

The first 18 residues, 1–18 (MRALGAVVTLLLWGQLFA), serve as a signal peptide directing secretion. The Sushi domain maps to 31–88 (DSCPKPPEIANGYVEHLVRYRCRQFYRLRAEGDGVYTLNDEKQWMNTVAGEKLPECEA). Intrachain disulfides connect Cys52–Cys86, Cys90–Cys207, Cys250–Cys281, and Cys292–Cys322. In terms of domain architecture, Peptidase S1 spans 103 to 345 (IIGGSMDAKG…LKDWVQETMA (243 aa)). 3 N-linked (GlcNAc...) asparagine glycosylation sites follow: Asn148, Asn182, and Asn264. Residues 259–264 (VPEKKN) are interaction with CD163.

Belongs to the peptidase S1 family. Tetramer of two alpha and two beta chains; disulfide-linked. The hemoglobin/haptoglobin complex is composed of a haptoglobin dimer bound to two hemoglobin alpha-beta dimers. Interacts with CD163. Interacts with ERGIC3. As to expression, expressed by the liver and secreted in plasma.

Its subcellular location is the secreted. As a result of hemolysis, hemoglobin is found to accumulate in the kidney and is secreted in the urine. Haptoglobin captures, and combines with free plasma hemoglobin to allow hepatic recycling of heme iron and to prevent kidney damage. Haptoglobin also acts as an antioxidant, has antibacterial activity and plays a role in modulating many aspects of the acute phase response. Hemoglobin/haptoglobin complexes are rapidly cleared by the macrophage CD163 scavenger receptor expressed on the surface of liver Kupfer cells through an endocytic lysosomal degradation pathway. The sequence is that of Haptoglobin (Hp) from Mus caroli (Ryukyu mouse).